The sequence spans 390 residues: GTPase Obg (390 aa).

The region spanning 1–159 (MKFVDEATIL…RELTLELLLL (159 aa)) is the Obg domain. Positions 128 to 147 (SRFKSSVNRAPRQKTNGTKG) are disordered. The segment covering 129–145 (RFKSSVNRAPRQKTNGT) has biased composition (polar residues). The OBG-type G domain maps to 160–333 (ADVGMLGLPN…LCWDVMNFLK (174 aa)). GTP is bound by residues 166–173 (GLPNAGKS), 191–195 (FTTLV), 213–216 (DIPG), 283–286 (NKVD), and 314–316 (SAA). Mg(2+)-binding residues include Ser173 and Thr193.

It belongs to the TRAFAC class OBG-HflX-like GTPase superfamily. OBG GTPase family. Monomer. It depends on Mg(2+) as a cofactor.

The protein localises to the cytoplasm. An essential GTPase which binds GTP, GDP and possibly (p)ppGpp with moderate affinity, with high nucleotide exchange rates and a fairly low GTP hydrolysis rate. Plays a role in control of the cell cycle, stress response, ribosome biogenesis and in those bacteria that undergo differentiation, in morphogenesis control. This Pectobacterium atrosepticum (strain SCRI 1043 / ATCC BAA-672) (Erwinia carotovora subsp. atroseptica) protein is GTPase Obg.